The following is a 226-amino-acid chain: Leucyl/phenylalanyl-tRNA--protein transferase (226 aa).

Belongs to the L/F-transferase family.

It is found in the cytoplasm. The catalysed reaction is N-terminal L-lysyl-[protein] + L-leucyl-tRNA(Leu) = N-terminal L-leucyl-L-lysyl-[protein] + tRNA(Leu) + H(+). It carries out the reaction N-terminal L-arginyl-[protein] + L-leucyl-tRNA(Leu) = N-terminal L-leucyl-L-arginyl-[protein] + tRNA(Leu) + H(+). The enzyme catalyses L-phenylalanyl-tRNA(Phe) + an N-terminal L-alpha-aminoacyl-[protein] = an N-terminal L-phenylalanyl-L-alpha-aminoacyl-[protein] + tRNA(Phe). Its function is as follows. Functions in the N-end rule pathway of protein degradation where it conjugates Leu, Phe and, less efficiently, Met from aminoacyl-tRNAs to the N-termini of proteins containing an N-terminal arginine or lysine. The polypeptide is Leucyl/phenylalanyl-tRNA--protein transferase (Pseudomonas fluorescens (strain ATCC BAA-477 / NRRL B-23932 / Pf-5)).